Here is a 558-residue protein sequence, read N- to C-terminus: Podocalyxin (558 aa).

The N-terminal stretch at 1-22 (MRCALALSALLLLLSTPPLLPS) is a signal peptide. Pro residues predominate over residues 20–29 (LPSSPSPSPS). Disordered regions lie at residues 20–50 (LPSS…PTPA), 83–210 (LGVS…DHLM), and 270–338 (SVIS…VAHE). At 23 to 461 (SPSPSPSPSQ…EEAEDRFSMP (439 aa)) the chain is on the extracellular side. Polar residues-rich tracts occupy residues 32–50 (QNAT…PTPA) and 83–107 (LGVS…NTTV). N-linked (GlcNAc...) asparagine glycans are attached at residues N33, N43, and N104. The segment covering 125–142 (STKSADTTTVATSTATAK) has biased composition (low complexity). Polar residues-rich tracts occupy residues 143-173 (PNTT…LTST), 190-204 (RQPT…PTSS), and 270-302 (SVIS…TSPA). N-linked (GlcNAc...) asparagine glycosylation is present at N144. Residues 313–324 (TMSSSPTAASTT) are compositionally biased toward low complexity. N360 carries N-linked (GlcNAc...) asparagine glycosylation. Residues 462–482 (LIITIVCMASFLLLVAALYGC) traverse the membrane as a helical segment. Residues 483–558 (CHQRLSQRKD…DLDEEEDTHL (76 aa)) lie on the Cytoplasmic side of the membrane. Residue T518 is modified to Phosphothreonine. Phosphoserine is present on residues S529 and S537. T556 bears the Phosphothreonine mark.

It belongs to the podocalyxin family. In terms of assembly, monomer; when associated with the membrane raft. Oligomer; when integrated in the apical membrane. Interacts (via the C-terminal PDZ-binding motif DTHL) with NHERF1 (via the PDZ domains); the interaction is not detected in glomerular epithelium cells, take place early in the secretory pathway and is necessary for its apical membrane sorting. Found in a complex with EZR, PODXL and NHERF2. Associates with the actin cytoskeleton through complex formation with EZR and NHERF2. Interacts (via the C-terminal PDZ-binding motif DTHL) with NHERF2 (via the PDZ 1 domain); interaction is detected in glomerular epithelium cells. Interacts with EZR. N- and O-linked glycosylated. Sialoglycoprotein. As to expression, glomerular epithelium cell (podocyte).

The protein localises to the apical cell membrane. The protein resides in the cell projection. It is found in the lamellipodium. It localises to the filopodium. Its subcellular location is the ruffle. The protein localises to the microvillus. The protein resides in the membrane raft. It is found in the membrane. Involved in the regulation of both adhesion and cell morphology and cancer progression. Functions as an anti-adhesive molecule that maintains an open filtration pathway between neighboring foot processes in the podocyte by charge repulsion. Acts as a pro-adhesive molecule, enhancing the adherence of cells to immobilized ligands, increasing the rate of migration and cell-cell contacts in an integrin-dependent manner. Induces the formation of apical actin-dependent microvilli. Involved in the formation of a preapical plasma membrane subdomain to set up initial epithelial polarization and the apical lumen formation during renal tubulogenesis. Plays a role in cancer development and aggressiveness by inducing cell migration and invasion through its interaction with the actin-binding protein EZR. Affects EZR-dependent signaling events, leading to increased activities of the MAPK and PI3K pathways in cancer cells. This chain is Podocalyxin (PODXL), found in Homo sapiens (Human).